A 353-amino-acid polypeptide reads, in one-letter code: Photosystem II protein D1 (353 aa).

The residue at position 2 (threonine 2) is an N-acetylthreonine. Residue threonine 2 is modified to Phosphothreonine. Helical transmembrane passes span 29-46, 118-133, and 142-156; these read YIGW…TATS, HFLL…EWEL, and WIAV…AATA. Histidine 118 lines the chlorophyll a pocket. Tyrosine 126 serves as a coordination point for pheophytin a. Aspartate 170 and glutamate 189 together coordinate [CaMn4O5] cluster. Residues 197 to 218 form a helical membrane-spanning segment; it reads FHMLGVAGVFGGSLFSAMHGSL. Histidine 198 is a chlorophyll a binding site. Residues histidine 215 and 264-265 each bind a quinone; that span reads SF. Fe cation is bound at residue histidine 215. Histidine 272 contacts Fe cation. Residues 274–288 form a helical membrane-spanning segment; the sequence is FLAAWPVVGIWFTAL. [CaMn4O5] cluster is bound by residues histidine 332, glutamate 333, aspartate 342, and alanine 344. A propeptide spanning residues 345–353 is cleaved from the precursor; it reads GVEVPSTNG.

Belongs to the reaction center PufL/M/PsbA/D family. As to quaternary structure, PSII is composed of 1 copy each of membrane proteins PsbA, PsbB, PsbC, PsbD, PsbE, PsbF, PsbH, PsbI, PsbJ, PsbK, PsbL, PsbM, PsbT, PsbX, PsbY, PsbZ, Psb30/Ycf12, at least 3 peripheral proteins of the oxygen-evolving complex and a large number of cofactors. It forms dimeric complexes. The cofactor is The D1/D2 heterodimer binds P680, chlorophylls that are the primary electron donor of PSII, and subsequent electron acceptors. It shares a non-heme iron and each subunit binds pheophytin, quinone, additional chlorophylls, carotenoids and lipids. D1 provides most of the ligands for the Mn4-Ca-O5 cluster of the oxygen-evolving complex (OEC). There is also a Cl(-1) ion associated with D1 and D2, which is required for oxygen evolution. The PSII complex binds additional chlorophylls, carotenoids and specific lipids.. Tyr-161 forms a radical intermediate that is referred to as redox-active TyrZ, YZ or Y-Z. Post-translationally, C-terminally processed by CTPA; processing is essential to allow assembly of the oxygen-evolving complex and thus photosynthetic growth.

It is found in the plastid. The protein resides in the chloroplast thylakoid membrane. The catalysed reaction is 2 a plastoquinone + 4 hnu + 2 H2O = 2 a plastoquinol + O2. Photosystem II (PSII) is a light-driven water:plastoquinone oxidoreductase that uses light energy to abstract electrons from H(2)O, generating O(2) and a proton gradient subsequently used for ATP formation. It consists of a core antenna complex that captures photons, and an electron transfer chain that converts photonic excitation into a charge separation. The D1/D2 (PsbA/PsbD) reaction center heterodimer binds P680, the primary electron donor of PSII as well as several subsequent electron acceptors. The sequence is that of Photosystem II protein D1 from Morus indica (Mulberry).